Here is a 461-residue protein sequence, read N- to C-terminus: Alkaline phosphatase 4 (461 aa).

Positions 1-41 (MKKMSLFQNMKSKLLPIAAVSVLTAGIFAGAELQQTEKASA) are cleaved as a signal peptide. Mg(2+) is bound at residue D58. D58 lines the Zn(2+) pocket. Catalysis depends on S108, which acts as the Phosphoserine intermediate. Mg(2+) contacts are provided by T161 and E282. 5 residues coordinate Zn(2+): D287, H291, D329, H330, and H423.

The protein belongs to the alkaline phosphatase family. As to quaternary structure, monomer. The cofactor is Mg(2+). Zn(2+) is required as a cofactor.

The catalysed reaction is a phosphate monoester + H2O = an alcohol + phosphate. The sequence is that of Alkaline phosphatase 4 (phoA) from Bacillus subtilis (strain 168).